The chain runs to 423 residues: Glycine amidinotransferase, mitochondrial (423 aa).

A mitochondrion-targeting transit peptide spans 1–48 (MLRVRCLRGGSRGAEAVHYIGSRLGRTLTGWVQRTFQSTQAATASSRN). Residues 39–51 (TQAATASSRNSSA) are compositionally biased toward low complexity. Positions 39-65 (TQAATASSRNSSAADDKATEPLPKDCP) are disordered. Phosphoserine occurs at positions 46 and 49. A compositionally biased stretch (basic and acidic residues) spans 52–61 (ADDKATEPLP). Asp170 is an arginine binding site. Active-site residues include Asp254 and His303. 4 residues coordinate arginine: Asp305, Arg322, Ser354, and Ser355. Lys385 is subject to N6-acetyllysine. The active-site Amidino-cysteine intermediate is Cys407.

It belongs to the amidinotransferase family. As to quaternary structure, homodimer.

The protein resides in the mitochondrion inner membrane. It carries out the reaction L-arginine + glycine = guanidinoacetate + L-ornithine. It catalyses the reaction 4-aminobutanoate + L-arginine = 4-guanidinobutanoate + L-ornithine. The catalysed reaction is beta-alanine + L-arginine = 3-guanidinopropanoate + L-ornithine. The enzyme catalyses taurine + L-arginine = taurocyamine + L-ornithine. Its pathway is amine and polyamine biosynthesis; creatine biosynthesis; creatine from L-arginine and glycine: step 1/2. Its function is as follows. Transamidinase that catalyzes the transfer of the amidino group of L-arginine onto the amino moiety of acceptor metabolites such as glycine, beta-alanine, gamma-aminobutyric acid (GABA) and taurine yielding the corresponding guanidine derivatives. Catalyzes the rate-limiting step of creatine biosynthesis, namely the transfer of the amidino group from L-arginine to glycine to generate guanidinoacetate, which is then methylated by GAMT to form creatine. Provides creatine as a source for ATP generation in tissues with high energy demands, in particular skeletal muscle, heart and brain. This is Glycine amidinotransferase, mitochondrial (GATM) from Pongo abelii (Sumatran orangutan).